Reading from the N-terminus, the 702-residue chain is BRCA1-associated RING domain protein 1 (702 aa).

The RING-type zinc-finger motif lies at 18 to 67; the sequence is CVKCKKPRGDLQYLGSSCKHAYCWECIATFQQKPSGKRSSVARHMCPSCA. 2 disordered regions span residues 153–205 and 281–346; these read DENR…TSVK and ASMS…YGTR. A compositionally biased stretch (polar residues) spans 174 to 188; sequence ASPTRNSTKRPSTVS. Residues 312–321 are compositionally biased toward basic and acidic residues; that stretch reads IKSDKIERRS. 3 ANK repeats span residues 347–376, 379–408, and 413–442; these read RGEA…CVNE, DGKT…VINA, and TLET…SIKI. Residues 601-702 enclose the BRCT domain; it reads MQPKLFAGCK…LGCSITTPPH (102 aa).

In terms of assembly, heterodimer (via RING-type zinc finger) with brc-1 to form the core CeBCD complex. Brc-1-brd-1 heterodimer-containing CeBCD complexes bound to chromatin are activated as an E3-ubiquitin ligase in response to DNA damage. The heterodimer interacts with the recombinase rad-51 following ionizing irradiation; the interaction is direct. The heterodimer interacts the E2-ubiquitin-conjugating enzyme let-70 following ionizing irradiation. The heterodimer interacts with the pro-crossover proteins msh-5 and syp-3. Interacts with smt-3, tac-1 and ubc-9. Autoubiquitinated. Post-translationally, phosphorylation of CeBCD complexes is required for E3 ubiquitin-protein ligase activity.

Its subcellular location is the cytoplasm. The protein resides in the nucleus. It is found in the chromosome. The catalysed reaction is S-ubiquitinyl-[E2 ubiquitin-conjugating enzyme]-L-cysteine + [acceptor protein]-L-lysine = [E2 ubiquitin-conjugating enzyme]-L-cysteine + N(6)-ubiquitinyl-[acceptor protein]-L-lysine.. It functions in the pathway protein modification; protein ubiquitination. Its activity is regulated as follows. E3 ubiquitin-protein ligase activity of CeBCD complexes occurs at DNA damage sites. Following DNA damage, E3 ubiquitin-protein ligase activity is reduced by caffeine treatment (inhibitor of ATM and ATK kinase activity). Its function is as follows. Constituent of the CeBCD complex that possesses E3 ubiquitin-protein ligase activity. When bound to chromatin, the brc-1-brd-1 heterodimer within the CeBCD complex is inactive during normal conditions, but in response to DNA damage, the brc-1-brd-1 heterodimer associates with other proteins such as the recombinase rad-51 or the E2-ubiquitin-conjugating enzyme let-70, which activate the CeBCD complex as an E3-ubiquitin ligase. Moreover, association between the brc-1-brd-1 heterodimer and rad-51 and let-70, probably requires DNA checkpoint proteins such as atl-1 and mre-11 in order to induce ubiquitination at DNA damage sites. To this end, the brc-1-brd-1 heterodimer coordinates a diverse range of cellular pathways such as DNA damage repair, ubiquitination and transcriptional regulation to maintain genomic stability. Plays a role in triggering cellular responses at damage sites in response to DNA damage that may be induced by ionizing radiation for example. In particular, protects against chromosome non-disjunction and nuclear fragmentation during meiotic double-strand break repair to ensure sister chromatid recombination and aid chromosome stability. The chain is BRCA1-associated RING domain protein 1 from Caenorhabditis elegans.